We begin with the raw amino-acid sequence, 304 residues long: Ornithine carbamoyltransferase (304 aa).

Carbamoyl phosphate-binding positions include 53 to 56 (STRT), glutamine 80, arginine 104, and 131 to 134 (HPCQ). L-ornithine-binding positions include asparagine 162, aspartate 222, and 226–227 (SM). Carbamoyl phosphate-binding positions include 261–262 (CL) and arginine 289.

Belongs to the aspartate/ornithine carbamoyltransferase superfamily. OTCase family.

It localises to the cytoplasm. The enzyme catalyses carbamoyl phosphate + L-ornithine = L-citrulline + phosphate + H(+). It functions in the pathway amino-acid biosynthesis; L-arginine biosynthesis; L-arginine from L-ornithine and carbamoyl phosphate: step 1/3. Functionally, reversibly catalyzes the transfer of the carbamoyl group from carbamoyl phosphate (CP) to the N(epsilon) atom of ornithine (ORN) to produce L-citrulline. The polypeptide is Ornithine carbamoyltransferase (Rhizobium johnstonii (strain DSM 114642 / LMG 32736 / 3841) (Rhizobium leguminosarum bv. viciae)).